A 276-amino-acid polypeptide reads, in one-letter code: 2-dehydro-3-deoxyphosphooctonate aldolase (276 aa).

This sequence belongs to the KdsA family.

Its subcellular location is the cytoplasm. The enzyme catalyses D-arabinose 5-phosphate + phosphoenolpyruvate + H2O = 3-deoxy-alpha-D-manno-2-octulosonate-8-phosphate + phosphate. It functions in the pathway carbohydrate biosynthesis; 3-deoxy-D-manno-octulosonate biosynthesis; 3-deoxy-D-manno-octulosonate from D-ribulose 5-phosphate: step 2/3. Its pathway is bacterial outer membrane biogenesis; lipopolysaccharide biosynthesis. The protein is 2-dehydro-3-deoxyphosphooctonate aldolase of Xanthomonas axonopodis pv. citri (strain 306).